The following is a 602-amino-acid chain: Elongation factor 4 (602 aa).

Residues 8–189 (KNIRNFSIIA…KIITTIPAPS (182 aa)) form the tr-type G domain. Residues 20 to 25 (DHGKST) and 136 to 139 (NKID) contribute to the GTP site.

The protein belongs to the TRAFAC class translation factor GTPase superfamily. Classic translation factor GTPase family. LepA subfamily.

It is found in the cell inner membrane. It carries out the reaction GTP + H2O = GDP + phosphate + H(+). Its function is as follows. Required for accurate and efficient protein synthesis under certain stress conditions. May act as a fidelity factor of the translation reaction, by catalyzing a one-codon backward translocation of tRNAs on improperly translocated ribosomes. Back-translocation proceeds from a post-translocation (POST) complex to a pre-translocation (PRE) complex, thus giving elongation factor G a second chance to translocate the tRNAs correctly. Binds to ribosomes in a GTP-dependent manner. The protein is Elongation factor 4 of Helicobacter pylori (strain ATCC 700392 / 26695) (Campylobacter pylori).